The primary structure comprises 203 residues: Vexin (203 aa).

Residues 59–70 show a composition bias toward basic and acidic residues; it reads HRTDRRDGEGRW. The interval 59-101 is disordered; that stretch reads HRTDRRDGEGRWSGRFQNPRLQGPHPAKTPARPVGTSEPKSAN.

Belongs to the vexin family.

Its subcellular location is the cell membrane. The protein resides in the nucleus. Required for neurogenesis in the neural plate and retina. Strongly cooperates with neural bHLH factors to promote neurogenesis. The protein is Vexin of Bos taurus (Bovine).